Here is a 328-residue protein sequence, read N- to C-terminus: Transcriptional regulator protein Pur-beta-B (328 aa).

3 disordered regions span residues 1-35, 100-124, and 289-328; these read MADG…ELAS, SPEQ…RALK, and QERQ…VDDD. Ala2 bears the N-acetylalanine mark. Residues 9–18 show a composition bias toward gly residues; that stretch reads ERGGSSGGPS. Residues 24 to 35 are compositionally biased toward basic and acidic residues; it reads MSREQETQELAS. The segment at 27-260 is DNA-binding; sequence EQETQELASK…LRVSEVKPSY (234 aa). Residues 289 to 303 are compositionally biased toward basic and acidic residues; sequence QERQRDKMYDRRGPG. Gly residues predominate over residues 304–317; sequence ERGGSLGPGAGGGG. Over residues 318 to 328 the composition is skewed to acidic residues; the sequence is DDSETEDVDDD.

The protein belongs to the PUR DNA-binding protein family.

The protein resides in the nucleus. Its function is as follows. Transcriptional regulator which can act as an activator or a repressor. The sequence is that of Transcriptional regulator protein Pur-beta-B (purb-b) from Xenopus laevis (African clawed frog).